The chain runs to 144 residues: Large ribosomal subunit protein uL15 (144 aa).

Residues 1-53 (MRLNTLSPAEGAKHAPKRVGRGIGSGLGKTAGRGHKGQNSRSGGGVRRGFEGG) are disordered. Residues 21-31 (RGIGSGLGKTA) are compositionally biased toward gly residues.

Belongs to the universal ribosomal protein uL15 family. Part of the 50S ribosomal subunit.

Its function is as follows. Binds to the 23S rRNA. The sequence is that of Large ribosomal subunit protein uL15 from Serratia proteamaculans (strain 568).